A 528-amino-acid chain; its full sequence is Linear primary-alkylsulfatase (528 aa).

His-42, His-44, Asp-46, His-47, Glu-151, and Glu-170 together coordinate Zn(2+). Sulfate is bound by residues 179–184 (NVHTLR) and Arg-189. His-213 provides a ligand contact to Zn(2+). Sulfate is bound at residue Tyr-275.

It belongs to the metallo-beta-lactamase superfamily. Type III sulfatase family. The cofactor is Zn(2+).

The catalysed reaction is a primary linear alkyl sulfate ester + H2O = a primary alcohol + sulfate + H(+). In terms of biological role, alkylsulfatase that cleaves the widely used detergent sodium dodecyl sulfate (SDS), which allows the bacterium to use SDS as a sole carbon or sulfur source. This chain is Linear primary-alkylsulfatase, found in Pseudomonas sp. (strain ATCC 19151).